Here is a 366-residue protein sequence, read N- to C-terminus: Carbamoyl phosphate synthase small chain (366 aa).

Residues 1–171 (MLEKRYLVLE…KTPYVSTGSD (171 aa)) are CPSase. L-glutamine-binding residues include Ser-47, Gly-221, and Gly-223. Residues 173 to 360 (SVVLLDFGKK…IAMMKDFKEK (188 aa)) enclose the Glutamine amidotransferase type-1 domain. Cys-248 acts as the Nucleophile in catalysis. Residues Leu-249, Gln-252, Asn-290, Gly-292, and Tyr-293 each coordinate L-glutamine. Catalysis depends on residues His-333 and Glu-335.

This sequence belongs to the CarA family. In terms of assembly, composed of two chains; the small (or glutamine) chain promotes the hydrolysis of glutamine to ammonia, which is used by the large (or ammonia) chain to synthesize carbamoyl phosphate. Tetramer of heterodimers (alpha,beta)4.

It carries out the reaction hydrogencarbonate + L-glutamine + 2 ATP + H2O = carbamoyl phosphate + L-glutamate + 2 ADP + phosphate + 2 H(+). The enzyme catalyses L-glutamine + H2O = L-glutamate + NH4(+). The protein operates within amino-acid biosynthesis; L-arginine biosynthesis; carbamoyl phosphate from bicarbonate: step 1/1. It participates in pyrimidine metabolism; UMP biosynthesis via de novo pathway; (S)-dihydroorotate from bicarbonate: step 1/3. Small subunit of the glutamine-dependent carbamoyl phosphate synthetase (CPSase). CPSase catalyzes the formation of carbamoyl phosphate from the ammonia moiety of glutamine, carbonate, and phosphate donated by ATP, constituting the first step of 2 biosynthetic pathways, one leading to arginine and/or urea and the other to pyrimidine nucleotides. The small subunit (glutamine amidotransferase) binds and cleaves glutamine to supply the large subunit with the substrate ammonia. This chain is Carbamoyl phosphate synthase small chain, found in Staphylococcus epidermidis (strain ATCC 12228 / FDA PCI 1200).